The sequence spans 23 residues: M-myrmeciitoxin-Mp2b (23 aa).

Gln-23 carries the glutamine amide modification.

It belongs to the formicidae venom precursor-01 superfamily. Ant pilosulin family. As to quaternary structure, heterodimer with M-MIITX-Mp2a (pilosulin-3a) (AC Q26464); disulfide-linked. Only heterodimers (and not monomers) have been identified in the venom. As to expression, expressed by the venom gland.

Its subcellular location is the secreted. Heterodimer protein that may serve both defensive (pain-inducing) and predatory (insecticidal) roles. Has membrane-disrupting activity and shows induction of non-specific calcium influx into cells,. Shows broad-spectrum activity against a diverse range of bacteria, and cell lines, as well as hemolytic activity (EC(50)=2.18 uM). In vivo, shows moderate insecticidal activity against D.melanogaster and potent anthelmintic activity against the veterinary nematode H.contortus. In addition, intraplantar injection into mice induces nocifensive behavior and mechanical allodynia. The polypeptide is M-myrmeciitoxin-Mp2b (Myrmecia pilosula (Jack jumper ant)).